A 224-amino-acid chain; its full sequence is Metalloproteinase inhibitor 4 (224 aa).

A signal peptide spans 1-29; that stretch reads MPQSPRPVPSWALLLRLLALLRPPGLGEA. Cysteine 30 is a binding site for Zn(2+). 2 involved in metalloproteinase-binding regions span residues 30–33 and 99–100; these read CSCA and SS. 6 cysteine pairs are disulfide-bonded: cysteine 30–cysteine 102, cysteine 32–cysteine 131, cysteine 42–cysteine 156, cysteine 158–cysteine 205, cysteine 163–cysteine 168, and cysteine 176–cysteine 197. In terms of domain architecture, NTR spans 30 to 156; sequence CSCAPAHPQQ…SLNHHYHLNC (127 aa).

It belongs to the protease inhibitor I35 (TIMP) family.

The protein localises to the secreted. Its function is as follows. Complexes with metalloproteinases (such as collagenases) and irreversibly inactivates them by binding to their catalytic zinc cofactor. In Bos taurus (Bovine), this protein is Metalloproteinase inhibitor 4 (TIMP4).